Consider the following 554-residue polypeptide: Exodeoxyribonuclease 7 large subunit (554 aa).

This sequence belongs to the XseA family. Heterooligomer composed of large and small subunits.

Its subcellular location is the cytoplasm. The enzyme catalyses Exonucleolytic cleavage in either 5'- to 3'- or 3'- to 5'-direction to yield nucleoside 5'-phosphates.. Functionally, bidirectionally degrades single-stranded DNA into large acid-insoluble oligonucleotides, which are then degraded further into small acid-soluble oligonucleotides. The chain is Exodeoxyribonuclease 7 large subunit from Chlamydia pneumoniae (Chlamydophila pneumoniae).